Consider the following 375-residue polypeptide: Glutamate 5-kinase (375 aa).

Residue lysine 13 participates in ATP binding. Serine 54, aspartate 141, and asparagine 153 together coordinate substrate. Residues 173–174 and 216–222 contribute to the ATP site; these read TD and TGGMATK. The 79-residue stretch at 281–359 folds into the PUA domain; it reads TGKIFIDAGA…EAIAAVLGYV (79 aa).

This sequence belongs to the glutamate 5-kinase family.

It is found in the cytoplasm. The catalysed reaction is L-glutamate + ATP = L-glutamyl 5-phosphate + ADP. It participates in amino-acid biosynthesis; L-proline biosynthesis; L-glutamate 5-semialdehyde from L-glutamate: step 1/2. Functionally, catalyzes the transfer of a phosphate group to glutamate to form L-glutamate 5-phosphate. The protein is Glutamate 5-kinase of Synechocystis sp. (strain ATCC 27184 / PCC 6803 / Kazusa).